The sequence spans 34 residues: Toxin GTx1-15 (34 aa).

Disulfide bonds link cysteine 2/cysteine 17, cysteine 9/cysteine 23, and cysteine 16/cysteine 30. Phenylalanine 34 carries the post-translational modification Phenylalanine amide.

The protein belongs to the neurotoxin 10 (Hwtx-1) family. 08 (Gtx1-15) subfamily. As to expression, expressed by the venom gland.

It localises to the secreted. Potent voltage-gated sodium channel blocker. Potently inhibits the voltage-gated sodium channels Nav1.7/SCN9A (IC(50)=0.58-10 nM). Also shows a moderate activity on Nav1.1/SCN1A (IC(50)=6 nM), Nav1.2/SCN2A (IC(50)=5-128 nM), Nav1.3/SCN3A (IC(50)=20.3-170 nM), and Nav1.6/SCN8A (IC(50)=17-20.1 nM). Shows an unclear inhibition of Nav1.4/SCN4A (IC(50)=200 nM to &gt;10 uM), Nav1.5/SCN5A (IC(50)=140 nM to &gt;10 uM) and Nav1.8/SCN10A (IC(50)=68-12200 nM). Weakly blocks the low voltage-gated calcium channels Cav3.1/CACNA1G (30% inhibition of the peak current at 9.8 nM). shows moderate affinity for lipid bilayers. In vivo, when tested on the OD1-induced mouse model of Nav1.7/SCN9A-mediated pain, the toxin is effective when co-administered with OD1, but lacks efficacy when delivered systemically. The sequence is that of Toxin GTx1-15 from Grammostola porteri (Tarantula spider).